The chain runs to 77 residues: Sec-independent protein translocase protein TatA (77 aa).

The helical transmembrane segment at 1–21 (MGSLSIWHWIVVIAVVLLLFG) threads the bilayer. Residues 43–60 (MQDDDKAPEKTEPVKSID) show a composition bias toward basic and acidic residues. The disordered stretch occupies residues 43–77 (MQDDDKAPEKTEPVKSIDHGATPSATRTDVGSKAV).

This sequence belongs to the TatA/E family. As to quaternary structure, the Tat system comprises two distinct complexes: a TatABC complex, containing multiple copies of TatA, TatB and TatC subunits, and a separate TatA complex, containing only TatA subunits. Substrates initially bind to the TatABC complex, which probably triggers association of the separate TatA complex to form the active translocon.

The protein resides in the cell inner membrane. Its function is as follows. Part of the twin-arginine translocation (Tat) system that transports large folded proteins containing a characteristic twin-arginine motif in their signal peptide across membranes. TatA could form the protein-conducting channel of the Tat system. The chain is Sec-independent protein translocase protein TatA from Bradyrhizobium sp. (strain BTAi1 / ATCC BAA-1182).